A 430-amino-acid chain; its full sequence is Dihydroorotase (430 aa).

Histidine 57 and histidine 59 together coordinate Zn(2+). Residues 59-61 and asparagine 91 contribute to the substrate site; that span reads HLR. Zn(2+) contacts are provided by aspartate 151, histidine 178, and histidine 231. A substrate-binding site is contributed by asparagine 277. Zn(2+) is bound at residue aspartate 304. Residue aspartate 304 is part of the active site. Substrate is bound by residues histidine 308 and 322-323; that span reads PG.

This sequence belongs to the metallo-dependent hydrolases superfamily. DHOase family. Class I DHOase subfamily. The cofactor is Zn(2+).

The enzyme catalyses (S)-dihydroorotate + H2O = N-carbamoyl-L-aspartate + H(+). The protein operates within pyrimidine metabolism; UMP biosynthesis via de novo pathway; (S)-dihydroorotate from bicarbonate: step 3/3. Its function is as follows. Catalyzes the reversible cyclization of carbamoyl aspartate to dihydroorotate. This chain is Dihydroorotase, found in Mycobacterium leprae (strain TN).